Here is a 642-residue protein sequence, read N- to C-terminus: 1-deoxy-D-xylulose-5-phosphate synthase (642 aa).

Thiamine diphosphate is bound by residues His-73 and 114–116 (SHA). A Mg(2+)-binding site is contributed by Asp-145. Residues 146–147 (GA), Asn-175, Phe-286, and Glu-367 contribute to the thiamine diphosphate site. Asn-175 contributes to the Mg(2+) binding site.

This sequence belongs to the transketolase family. DXPS subfamily. As to quaternary structure, homodimer. Requires Mg(2+) as cofactor. The cofactor is thiamine diphosphate.

The enzyme catalyses D-glyceraldehyde 3-phosphate + pyruvate + H(+) = 1-deoxy-D-xylulose 5-phosphate + CO2. The protein operates within metabolic intermediate biosynthesis; 1-deoxy-D-xylulose 5-phosphate biosynthesis; 1-deoxy-D-xylulose 5-phosphate from D-glyceraldehyde 3-phosphate and pyruvate: step 1/1. In terms of biological role, catalyzes the acyloin condensation reaction between C atoms 2 and 3 of pyruvate and glyceraldehyde 3-phosphate to yield 1-deoxy-D-xylulose-5-phosphate (DXP). The protein is 1-deoxy-D-xylulose-5-phosphate synthase of Saccharopolyspora erythraea (strain ATCC 11635 / DSM 40517 / JCM 4748 / NBRC 13426 / NCIMB 8594 / NRRL 2338).